We begin with the raw amino-acid sequence, 460 residues long: Cysteine--tRNA ligase (460 aa).

Cys27 is a binding site for Zn(2+). Positions 29 to 39 match the 'HIGH' region motif; that stretch reads PTVYDLIHVGN. Cys207, His232, and Glu236 together coordinate Zn(2+). The 'KMSKS' region signature appears at 264–268; sequence KMSKS. Lys267 provides a ligand contact to ATP.

The protein belongs to the class-I aminoacyl-tRNA synthetase family. As to quaternary structure, monomer. Zn(2+) is required as a cofactor.

It localises to the cytoplasm. The catalysed reaction is tRNA(Cys) + L-cysteine + ATP = L-cysteinyl-tRNA(Cys) + AMP + diphosphate. The protein is Cysteine--tRNA ligase of Thermotoga petrophila (strain ATCC BAA-488 / DSM 13995 / JCM 10881 / RKU-1).